The primary structure comprises 150 residues: Putative esterase SSO1253 (150 aa).

This sequence belongs to the thioesterase PaaI family.

The polypeptide is Putative esterase SSO1253 (Saccharolobus solfataricus (strain ATCC 35092 / DSM 1617 / JCM 11322 / P2) (Sulfolobus solfataricus)).